The chain runs to 633 residues: Ankyrin repeat and SOCS box protein 2 (633 aa).

Residues 26-45 (SEDELVQMAIEQSLADKTRG) form the UIM domain. ANK repeat units lie at residues 102–131 (APVD…NLSE), 135–165 (EGWL…VIDQ), 169–198 (QEET…EPDI), 202–231 (SRET…DTNH), 235–264 (RGWT…KVEA), 268–297 (YGIT…DINT), 301–330 (DSAS…DANK), 334–363 (DGML…RTRV), 366–395 (SGIS…DVNA), 408–437 (RRSS…DPNR), 438–467 (DVIN…NIDA), and 474–502 (TAFP…NGEP). Serine 369 bears the Phosphoserine mark. Residues 579-633 (EDWAVIKEKAEPPRPLAHLCRLRVRKAIGKYRIKLLDTLPLPGRLIRYLKYENTQ) enclose the SOCS box domain.

This sequence belongs to the ankyrin SOCS box (ASB) family. Component of a probable ECS E3 ubiquitin-protein ligase complex which contains CUL5, either RBX1 or RNF7/RBX2, Elongin BC complex (ELOB and ELOC) and ASB2. Interacts with SKP2. Through its interaction with SKP2, likely to bridge the formation of dimeric E3-ubiquitin-protein ligase complexes composed of an ECS complex and an SCF(SKP2) complex. Interacts with JAK2; the interaction targets JAK2 for Notch-mediated proteasomal degradation. Interacts with TCF3/E2A; the interaction is mediated by SKP2 and targets TCF3 for Notch-mediated proteasomal degradation. Interacts with DES. In terms of processing, monoubiquitinated.

It is found in the cytoplasm. The protein localises to the cytoskeleton. Its subcellular location is the stress fiber. It localises to the myofibril. The protein resides in the sarcomere. It is found in the z line. The protein operates within protein modification; protein ubiquitination. Functionally, substrate-recognition component of a SCF-like ECS (Elongin-Cullin-SOCS-box protein) E3 ubiquitin-protein ligase complex which mediates the ubiquitination and subsequent proteasomal degradation of target proteins. Mediates Notch-induced ubiquitination and degradation of substrates including E2A and JAK2. Required during embryonic heart development for complete heart looping. Required for cardiomyocyte differentiation. Involved in myogenic differentiation and targets filamin FLNB for proteasomal degradation but not filamin FLNA. Also targets DES for proteasomal degradation. Acts as a negative regulator of skeletal muscle mass. This is Ankyrin repeat and SOCS box protein 2 from Bos taurus (Bovine).